The chain runs to 175 residues: Ferritin light chain (175 aa).

S2 carries the N-acetylserine modification. Residues 7 to 156 (QNYSTEVEAA…DHLTNIQRLV (150 aa)) enclose the Ferritin-like diiron domain. E54, E57, E58, E61, and E64 together coordinate Fe cation. The tract at residues 54 to 61 (ELAEEKRE) is catalytic site for iron oxidation.

Belongs to the ferritin family. Oligomer of 24 subunits. There are two types of subunits: L (light) chain and H (heavy) chain. The major chain can be light or heavy, depending on the species and tissue type. The functional molecule forms a roughly spherical shell with a diameter of 12 nm and contains a central cavity into which the insoluble mineral iron core is deposited. Interacts with NCOA4.

Its subcellular location is the cytoplasmic vesicle. The protein resides in the autophagosome. It localises to the cytoplasm. The protein localises to the autolysosome. Functionally, stores iron in a soluble, non-toxic, readily available form. Important for iron homeostasis. Iron is taken up in the ferrous form and deposited as ferric hydroxides after oxidation. Also plays a role in delivery of iron to cells. Mediates iron uptake in capsule cells of the developing kidney. Delivery to lysosomes by the cargo receptor NCOA4 for autophagic degradation and release or iron. In Equus caballus (Horse), this protein is Ferritin light chain (FTL).